Consider the following 151-residue polypeptide: UPF0178 protein YaiI (151 aa).

It belongs to the UPF0178 family.

This is UPF0178 protein YaiI from Salmonella paratyphi C (strain RKS4594).